The primary structure comprises 239 residues: LexA repressor (239 aa).

The segment at residues 26–46 (FDEMKDALDLASKSGIHRLIT) is a DNA-binding region (H-T-H motif). The disordered stretch occupies residues 80–108 (RRGFSPSVIEGSLGKPQPAAAPAPAKPVA). Catalysis depends on for autocatalytic cleavage activity residues serine 159 and lysine 197.

It belongs to the peptidase S24 family. Homodimer.

The enzyme catalyses Hydrolysis of Ala-|-Gly bond in repressor LexA.. Its function is as follows. Represses a number of genes involved in the response to DNA damage (SOS response), including recA and lexA. In the presence of single-stranded DNA, RecA interacts with LexA causing an autocatalytic cleavage which disrupts the DNA-binding part of LexA, leading to derepression of the SOS regulon and eventually DNA repair. The protein is LexA repressor of Rhizobium leguminosarum bv. trifolii (strain WSM2304).